Consider the following 610-residue polypeptide: Chaperone protein DnaK (610 aa).

The residue at position 173 (T173) is a Phosphothreonine; by autocatalysis. Low complexity predominate over residues Q579 to N592. Positions Q579–K610 are disordered. Positions A599–K610 are enriched in basic and acidic residues.

This sequence belongs to the heat shock protein 70 family.

Acts as a chaperone. The polypeptide is Chaperone protein DnaK (Staphylococcus aureus (strain bovine RF122 / ET3-1)).